Reading from the N-terminus, the 67-residue chain is Tachystatin-A2 (67 aa).

An N-terminal signal peptide occupies residues 1–23 (MKLQNTLILIGCLFLMGAMIGDA). Intrachain disulfides connect cysteine 27/cysteine 47, cysteine 34/cysteine 52, and cysteine 46/cysteine 64.

In terms of tissue distribution, granular hemocytes, small secretory granules.

It localises to the secreted. Exhibits stronger antimicrobial activity against the Gram-positive bacteria (S.aureus (IC(50)=4.2 ug/ml)) and fungi (C.albicans (IC(50)=3.0 ug/ml) and P.pastoris (IC(50)=0.5 ug/ml)) than Gram-negative bacteria (E.coli (IC(50)=25 ug/ml)). Binds to chitin (8.4 uM are required to obtain 50% of binding). Does not cause hemolysis on sheep erythrocytes. Has no blocking activity on the P-type calcium channel. Has also been shown to weakly inhibit Kv1.2/KCNA2 voltage-gated potassium channels and TRPV1 receptors. This is Tachystatin-A2 from Tachypleus tridentatus (Japanese horseshoe crab).